The sequence spans 88 residues: Small ribosomal subunit protein uS17 (88 aa).

It belongs to the universal ribosomal protein uS17 family. In terms of assembly, part of the 30S ribosomal subunit.

One of the primary rRNA binding proteins, it binds specifically to the 5'-end of 16S ribosomal RNA. The chain is Small ribosomal subunit protein uS17 from Teredinibacter turnerae (strain ATCC 39867 / T7901).